Here is a 237-residue protein sequence, read N- to C-terminus: Ribose-5-phosphate isomerase A (237 aa).

Residues 33–36, 88–91, and 101–104 each bind substrate; these read TGST, DGAD, and KGRG. Catalysis depends on glutamate 110, which acts as the Proton acceptor. Lysine 128 serves as a coordination point for substrate.

This sequence belongs to the ribose 5-phosphate isomerase family. In terms of assembly, homodimer.

It carries out the reaction aldehydo-D-ribose 5-phosphate = D-ribulose 5-phosphate. It functions in the pathway carbohydrate degradation; pentose phosphate pathway; D-ribose 5-phosphate from D-ribulose 5-phosphate (non-oxidative stage): step 1/1. Catalyzes the reversible conversion of ribose-5-phosphate to ribulose 5-phosphate. The chain is Ribose-5-phosphate isomerase A from Methanoregula boonei (strain DSM 21154 / JCM 14090 / 6A8).